A 61-amino-acid polypeptide reads, in one-letter code: UPF0312 protein (61 aa).

It belongs to the UPF0312 family.

This chain is UPF0312 protein, found in Delftia acidovorans (Pseudomonas acidovorans).